A 156-amino-acid polypeptide reads, in one-letter code: Ribosomal RNA large subunit methyltransferase H (156 aa).

Residues Leu73, Gly104, and 123 to 128 contribute to the S-adenosyl-L-methionine site; that span reads ISSMTL.

It belongs to the RNA methyltransferase RlmH family. In terms of assembly, homodimer.

The protein localises to the cytoplasm. The catalysed reaction is pseudouridine(1915) in 23S rRNA + S-adenosyl-L-methionine = N(3)-methylpseudouridine(1915) in 23S rRNA + S-adenosyl-L-homocysteine + H(+). Specifically methylates the pseudouridine at position 1915 (m3Psi1915) in 23S rRNA. This is Ribosomal RNA large subunit methyltransferase H from Burkholderia ambifaria (strain MC40-6).